Here is a 214-residue protein sequence, read N- to C-terminus: Protein DEHYDRATION-INDUCED 19 homolog 5 (214 aa).

At serine 110 the chain carries Phosphoserine. Positions 148–185 (PKKSKLVQPDSSSEASMEDNSLIRDSTEKDWESPSPLS) are disordered. The segment covering 156–166 (PDSSSEASMED) has biased composition (polar residues). A compositionally biased stretch (basic and acidic residues) spans 168–179 (SLIRDSTEKDWE).

The protein belongs to the Di19 family. In terms of processing, phosphorylated in vitro by CPK3 or CPK11. In terms of tissue distribution, expressed in seedlings, roots, leaves, stems, flowers and siliques.

The protein localises to the nucleus. The protein is Protein DEHYDRATION-INDUCED 19 homolog 5 (DI19-5) of Arabidopsis thaliana (Mouse-ear cress).